The following is a 219-amino-acid chain: Transmembrane protein 17A (219 aa).

Residues Asn18 and Asn27 are each glycosylated (N-linked (GlcNAc...) asparagine). 4 helical membrane-spanning segments follow: residues 56-76 (MMLY…LLML), 83-103 (LPVY…IFEV), 121-141 (LAGF…FFIT), and 153-173 (AVHS…FLAL).

Belongs to the TMEM17 family. Part of the tectonic-like complex (also named B9 complex).

It localises to the cell projection. The protein localises to the cilium membrane. Functionally, transmembrane component of the tectonic-like complex, a complex localized at the transition zone of primary cilia and acting as a barrier that prevents diffusion of transmembrane proteins between the cilia and plasma membranes. Required for ciliogenesis and sonic hedgehog/SHH signaling. This Danio rerio (Zebrafish) protein is Transmembrane protein 17A (tmem17a).